Here is a 769-residue protein sequence, read N- to C-terminus: Trehalose 6-phosphate phosphorylase (769 aa).

342–343 provides a ligand contact to substrate; that stretch reads WD. Glutamate 480 serves as the catalytic Proton donor. 589 to 590 contacts substrate; the sequence is KQ.

Belongs to the glycosyl hydrolase 65 family. Monomer.

The catalysed reaction is alpha,alpha-trehalose 6-phosphate + phosphate = beta-D-glucose 1-phosphate + D-glucose 6-phosphate. Catalyzes the conversion of trehalose 6-phosphate into glucose 1-phosphate and glucose 6-phosphate. This is Trehalose 6-phosphate phosphorylase (trePP) from Lactococcus lactis subsp. lactis (strain IL1403) (Streptococcus lactis).